The primary structure comprises 225 residues: Ribose-5-phosphate isomerase A (225 aa).

Substrate is bound by residues threonine 32–threonine 35, aspartate 85–aspartate 88, and lysine 98–glycine 101. Catalysis depends on glutamate 107, which acts as the Proton acceptor. Lysine 125 lines the substrate pocket.

This sequence belongs to the ribose 5-phosphate isomerase family. In terms of assembly, homodimer.

The catalysed reaction is aldehydo-D-ribose 5-phosphate = D-ribulose 5-phosphate. The protein operates within carbohydrate degradation; pentose phosphate pathway; D-ribose 5-phosphate from D-ribulose 5-phosphate (non-oxidative stage): step 1/1. Functionally, catalyzes the reversible conversion of ribose-5-phosphate to ribulose 5-phosphate. This Marinobacter nauticus (strain ATCC 700491 / DSM 11845 / VT8) (Marinobacter aquaeolei) protein is Ribose-5-phosphate isomerase A.